The following is an 874-amino-acid chain: Probable inorganic carbon transporter subunit DabA (874 aa).

Positions 398, 400, 580, and 595 each coordinate Zn(2+).

It belongs to the inorganic carbon transporter (TC 9.A.2) DabA family. In terms of assembly, forms a complex with DabB. Requires Zn(2+) as cofactor.

It localises to the cell membrane. In terms of biological role, part of an energy-coupled inorganic carbon pump. This Bacillus cereus (strain ATCC 10987 / NRS 248) protein is Probable inorganic carbon transporter subunit DabA.